Here is a 202-residue protein sequence, read N- to C-terminus: MKQVVVATKNMGKVREFAELFERFDLEVKSLHDFPHIEEVEETGETFEENAILKADSLSRQLNAIVIADDSGLIVDALNGKPGVYSARFAGEPKDDQANIDKVLQELNEVAFEKRKARFYCALAVAFPEGDKKPVIVNGTCEGFILEQRRGENGFGYDPIFYVEEYKKAMAELSSDEKNAISHRGRALRKLEEKIPEWFLGE.

8–13 is a substrate binding site; that stretch reads TKNMGK. Glu-41 and Asp-70 together coordinate Mg(2+). The active-site Proton acceptor is Asp-70. Substrate is bound by residues Ser-71, 155–158, Lys-178, and 183–184; these read FGYD and HR.

The protein belongs to the HAM1 NTPase family. Homodimer. Mg(2+) is required as a cofactor.

The catalysed reaction is XTP + H2O = XMP + diphosphate + H(+). It catalyses the reaction dITP + H2O = dIMP + diphosphate + H(+). It carries out the reaction ITP + H2O = IMP + diphosphate + H(+). In terms of biological role, pyrophosphatase that catalyzes the hydrolysis of nucleoside triphosphates to their monophosphate derivatives, with a high preference for the non-canonical purine nucleotides XTP (xanthosine triphosphate), dITP (deoxyinosine triphosphate) and ITP. Seems to function as a house-cleaning enzyme that removes non-canonical purine nucleotides from the nucleotide pool, thus preventing their incorporation into DNA/RNA and avoiding chromosomal lesions. The chain is dITP/XTP pyrophosphatase from Bacillus anthracis.